The sequence spans 126 residues: uncharacterized protein (126 aa).

Positions 20–118 constitute an HTH hxlR-type domain; that stretch reads CPSREVLKHV…WIELNLPEVL (99 aa).

This is an uncharacterized protein from Escherichia coli (strain K12).